The following is a 111-amino-acid chain: Large ribosomal subunit protein eL31 (111 aa).

Belongs to the eukaryotic ribosomal protein eL31 family.

The sequence is that of Large ribosomal subunit protein eL31 (RPL31) from Encephalitozoon cuniculi (strain GB-M1) (Microsporidian parasite).